The sequence spans 448 residues: Protein Z-dependent protease inhibitor (448 aa).

A signal peptide spans 1–21 (MRVASSLFLPVLLTEVWLVTS). Positions 33–70 (VHLESQDYENQTWEEYTRTDPREEEEEEEEKEEGKDEE) are disordered. A compositionally biased stretch (acidic residues) spans 54–63 (REEEEEEEEK). N-linked (GlcNAc...) asparagine glycosylation is present at N81. The tract at residues 140 to 157 (AGPLILPALFKKVKETFS) is heparin-binding. N-linked (GlcNAc...) asparagine glycosylation is found at N184, N278, and N299.

It belongs to the serpin family. Post-translationally, phosphorylated by FAM20C in the extracellular medium. In terms of tissue distribution, detectable in liver, but not in heart, brain, spleen, lung, kidney, skeletal muscle or testes.

It is found in the secreted. Inhibits activity of the coagulation protease factor Xa in the presence of PROZ, calcium and phospholipids. Also inhibits factor XIa in the absence of cofactors. The chain is Protein Z-dependent protease inhibitor (Serpina10) from Mus musculus (Mouse).